A 1501-amino-acid polypeptide reads, in one-letter code: Pleiotropic ABC efflux transporter of multiple drugs CDR1 (1501 aa).

Residues 1 to 30 (MSDSKMSSQDESKLEKAISQDSSSENHSIN) form a disordered region. Over 1 to 513 (MSDSKMSSQD…NFLRMKGDPS (513 aa)) the chain is Cytoplasmic. The tract at residues 2–512 (SDSKMSSQDE…RNFLRMKGDP (511 aa)) is NBD1. Residues 8–18 (SQDESKLEKAI) show a composition bias toward basic and acidic residues. In terms of domain architecture, ABC transporter 1 spans 150-404 (LATEGFRHFQ…FEKMGWKCPQ (255 aa)). The chain crosses the membrane as a helical span at residues 514-534 (IPIFSVFGQLVMGLILSSVFY). Over 535 to 548 (NLSQTTGSFYYRGA) the chain is Extracellular. A helical transmembrane segment spans residues 549–569 (AMFFAVLFNAFSSLLEIMSLF). At 570-597 (EARPIVEKHKKYALYRPSADALASIISE) the chain is on the cytoplasmic side. A helical membrane pass occupies residues 598-618 (LPVKLAMSMSFNFVFYFMVNF). The Extracellular portion of the chain corresponds to 619–622 (RRNP). The chain crosses the membrane as a helical span at residues 623-643 (GRFFFYWLMCIWCTFVMSHLF). Topologically, residues 644-654 (RSIGAVSTSIS) are cytoplasmic. The helical transmembrane segment at 655–675 (GAMTPATVLLLAMVIYTGFVI) threads the bilayer. Topologically, residues 676-764 (PTPSMLGWSR…QYYNSHKWRN (89 aa)) are extracellular. Residues 765-785 (LGITIGFAVFFLAIYIALTEF) form a helical membrane-spanning segment. At 786 to 1195 (NKGAMQKGEI…TIVQDWRSPG (410 aa)) the chain is on the cytoplasmic side. The segment at 786-1195 (NKGAMQKGEI…TIVQDWRSPG (410 aa)) is NBD2. One can recognise an ABC transporter 2 domain in the interval 859-1103 (FFWRDLTYQV…MINYFEKYGA (245 aa)). 895–902 (GASGAGKT) is an ATP binding site. Positions 1137 to 1164 (RNSSEYQAVREEINRMEAELSKLPRDND) form a coiled coil. Residues 1196-1216 (YIYSKIFLVVSAALFNGFSFF) form a helical membrane-spanning segment. Topologically, residues 1217–1229 (KAKNNMQGLQNQM) are extracellular. The chain crosses the membrane as a helical span at residues 1230-1250 (FSVFMFFIPFNTLVQQMLPYF). The Cytoplasmic segment spans residues 1251 to 1280 (VKQRDVYEVREAPSRTFSWFAFIAGQITSE). The helical transmembrane segment at 1281 to 1301 (IPYQVAVGTIAFFCWYYPLGL) threads the bilayer. At 1302-1314 (YNNATPTDSVNPR) the chain is on the extracellular side. The helical transmembrane segment at 1315–1335 (GVLMWMLVTAFYVYTATMGQL) threads the bilayer. Residues 1336–1355 (CMSFSELADNAANLATLLFT) lie on the Cytoplasmic side of the membrane. Residues 1356-1376 (MCLNFCGVLAGPDVLPGFWIF) form a helical membrane-spanning segment. Residues 1377–1466 (MYRCNPFTYL…NSLYSERWRN (90 aa)) lie on the Extracellular side of the membrane. Residues 1467-1487 (FGIFIAFIAINIILTVIFYWL) form a helical membrane-spanning segment. Residues 1488 to 1501 (ARVPKGNREKKNKK) are Cytoplasmic-facing.

Belongs to the ABC transporter superfamily.

The protein resides in the cell membrane. With respect to regulation, disulfiram reverses CDR1-mediated drug resistance by interaction with both ATP and substrate-binding sites of the transporter and may be useful for antifungal therapy. Its function is as follows. Pleiotropic ABC efflux transporter that confers resistance to numerous chemicals including anisomycin, cycloheximide, fluconazole, miconazole, ketoconazole, itriconazole, nystatin, terbinafine, amorolfine, brefeldin A, amphotericin B, fluphenazine, as well as estrogen. Plays a role in farnesol-induced apoptotic process through glutathione efflux activity. Mediates in-to-out translocation of membrane phospholipids including aminophospholipids and thus regulates asymmetric distribution of phosphatidylethanolamine. Exhibits nucleoside triphosphatase activity. The chain is Pleiotropic ABC efflux transporter of multiple drugs CDR1 (CDR1) from Candida albicans (strain SC5314 / ATCC MYA-2876) (Yeast).